Here is a 431-residue protein sequence, read N- to C-terminus: Enolase (431 aa).

Glutamine 166 is a (2R)-2-phosphoglycerate binding site. Catalysis depends on glutamate 208, which acts as the Proton donor. Residues aspartate 245, glutamate 288, and aspartate 315 each coordinate Mg(2+). Positions 340, 369, 370, and 391 each coordinate (2R)-2-phosphoglycerate. Lysine 340 acts as the Proton acceptor in catalysis.

The protein belongs to the enolase family. It depends on Mg(2+) as a cofactor.

It is found in the cytoplasm. The protein resides in the secreted. The protein localises to the cell surface. The enzyme catalyses (2R)-2-phosphoglycerate = phosphoenolpyruvate + H2O. It functions in the pathway carbohydrate degradation; glycolysis; pyruvate from D-glyceraldehyde 3-phosphate: step 4/5. Functionally, catalyzes the reversible conversion of 2-phosphoglycerate (2-PG) into phosphoenolpyruvate (PEP). It is essential for the degradation of carbohydrates via glycolysis. This chain is Enolase, found in Clostridium acetobutylicum (strain ATCC 824 / DSM 792 / JCM 1419 / IAM 19013 / LMG 5710 / NBRC 13948 / NRRL B-527 / VKM B-1787 / 2291 / W).